Reading from the N-terminus, the 149-residue chain is Large ribosomal subunit protein bL9 (149 aa).

It belongs to the bacterial ribosomal protein bL9 family.

In terms of biological role, binds to the 23S rRNA. This chain is Large ribosomal subunit protein bL9, found in Pasteurella multocida (strain Pm70).